Consider the following 314-residue polypeptide: BCL2/adenovirus E1B 19 kDa protein-interacting protein 2 (314 aa).

Residues 1 to 21 form a disordered region; the sequence is MEGVELKEEWQDEDFPIPLPE. Acidic residues predominate over residues 10 to 21; sequence WQDEDFPIPLPE. A phosphoserine mark is found at serine 41 and serine 77. The segment at 76 to 100 is disordered; that stretch reads ESGEIDLDGLDTPSENSNEFEWEDD. Threonine 87 carries the post-translational modification Phosphothreonine. Phosphoserine is present on residues serine 89, serine 92, and serine 114. Positions 147-304 constitute a CRAL-TRIO domain; the sequence is IEPYKKVISH…CIKQVDQELN (158 aa).

It is found in the cytoplasm. The protein resides in the perinuclear region. In terms of biological role, implicated in the suppression of cell death. Interacts with the BCL-2 and adenovirus E1B 19 kDa proteins. The polypeptide is BCL2/adenovirus E1B 19 kDa protein-interacting protein 2 (BNIP2) (Homo sapiens (Human)).